Consider the following 210-residue polypeptide: Large ribosomal subunit protein uL4 (210 aa).

Polar residues predominate over residues 41 to 51 (ANARQGTQSTK). Disordered regions lie at residues 41-60 (ANAR…QGSS) and 67-98 (KGTG…DFSK).

It belongs to the universal ribosomal protein uL4 family. Part of the 50S ribosomal subunit.

Its function is as follows. One of the primary rRNA binding proteins, this protein initially binds near the 5'-end of the 23S rRNA. It is important during the early stages of 50S assembly. It makes multiple contacts with different domains of the 23S rRNA in the assembled 50S subunit and ribosome. In terms of biological role, forms part of the polypeptide exit tunnel. This is Large ribosomal subunit protein uL4 from Dehalococcoides mccartyi (strain ATCC BAA-2266 / KCTC 15142 / 195) (Dehalococcoides ethenogenes (strain 195)).